The primary structure comprises 235 residues: High affinity immunoglobulin epsilon receptor subunit beta (235 aa).

A disordered region spans residues 1-23 (MDTENRSRADLALPNPQESSSAP). Residues 1–51 (MDTENRSRADLALPNPQESSSAPDIELLEASPAKAAPPKQTWRTFLKKELE) lie on the Cytoplasmic side of the membrane. Residues 52–71 (FLGATQILVGLICLCFGTIV) traverse the membrane as a helical segment. The Extracellular portion of the chain corresponds to 72–89 (CSVLYVSDFDEEVLLLYK). Residues 90–109 (LGYPFWGAVLFVLSGFLSII) traverse the membrane as a helical segment. Over 110–122 (SERKNTLYLVRGS) the chain is Cytoplasmic. Residues 123–142 (LGANIVSSIAAGTGIAMLIL) traverse the membrane as a helical segment. Residues 143 to 171 (NLTNNFAYMNNCKNVTEDDGCFVASFTTE) are Extracellular-facing. A helical membrane pass occupies residues 172–191 (LVLMMLFLTILAFCSAVLFT). Topologically, residues 192–235 (IYRIGQELESKKVPDDRLYEELNVYSPIYSELEDKGETSSPVDS) are cytoplasmic. 2 positions are modified to phosphotyrosine: Tyr210 and Tyr216. At Ser217 the chain carries Phosphoserine. Phosphotyrosine is present on Tyr220.

This sequence belongs to the MS4A family. In terms of assembly, tetramer of an alpha chain, a beta chain, and two disulfide linked gamma chains. Binds LILRB1. Interacts with FGR. Interacts with FGR and FES/FPS. Interacts with LYN. Phosphorylated on tyrosine residues by LYN.

The protein localises to the membrane. High affinity receptor that binds to the Fc region of immunoglobulins epsilon. Aggregation of FCER1 by multivalent antigens is required for the full mast cell response, including the release of preformed mediators (such as histamine) by degranulation and de novo production of lipid mediators and cytokines. Also mediates the secretion of important lymphokines. Binding of allergen to receptor-bound IgE leads to cell activation and the release of mediators responsible for the manifestations of allergy. This is High affinity immunoglobulin epsilon receptor subunit beta (Ms4a2) from Mus musculus (Mouse).